The chain runs to 113 residues: MARRGGFPGGMPGNMNNLMKQAQKMQRQMEEAQKQLEDAEVTAKAGGGAVEVTVSGKKEITKVKLSEEVVDPDDIEMLEDLIMAATNEALRQIDEQSQASMSKITGGLGGGLF.

Residues 1–12 show a composition bias toward gly residues; that stretch reads MARRGGFPGGMP. The tract at residues 1-45 is disordered; the sequence is MARRGGFPGGMPGNMNNLMKQAQKMQRQMEEAQKQLEDAEVTAKA. Basic and acidic residues predominate over residues 27 to 37; that stretch reads RQMEEAQKQLE.

Belongs to the YbaB/EbfC family. Homodimer.

The protein localises to the cytoplasm. Its subcellular location is the nucleoid. Binds to DNA and alters its conformation. May be involved in regulation of gene expression, nucleoid organization and DNA protection. The chain is Nucleoid-associated protein EUBREC_0329 from Agathobacter rectalis (strain ATCC 33656 / DSM 3377 / JCM 17463 / KCTC 5835 / VPI 0990) (Eubacterium rectale).